The sequence spans 326 residues: Transposase InsH for insertion sequence element IS5Y (326 aa).

This sequence belongs to the transposase 11 family.

Functionally, involved in the transposition of the insertion sequence IS5. This chain is Transposase InsH for insertion sequence element IS5Y (insH5), found in Escherichia coli (strain K12).